Here is a 508-residue protein sequence, read N- to C-terminus: MGLPWYRVHTVVLNDPGRLLSVHIMHTALVAGWAGSMALYELAVFDPSDPVLDPMWRQGMFVIPFMTRLGITNSWGGWSVTGGAIPNPGIWSYEGVAGAHIVFSGLCFLAAIWHWVYWDLEIFSDERTGKPSLDLPKIFGIHLFLAGVACFGFGAFHVTGLYGPGIWVSDPYGLTGKVQSVNPAWGVEGFDPFVPGGIASHHIAAGTLGILAGLFHLSVRPPQRLYKGLRMGNIETVLSSSIAAVFFAAFVVAGTMWYGSATTPIELFGPTRYQWDQGYFQQEIYRRVSAGLAENQSLSEAWSKIPEKLAFYDYIGNNPAKGGLFRAGSMDNGDGIAVGWLGHPIFRDKEGRELFVRRMPTFFETFPVVLVDGDGIVRADVPFRRAESKYSVEQVGVTVEFYGGELNGVSYSDPATVKKYARRAQLGEIFELDRATLKSDGVFRSSPRGWFTFGHASFALLFFFGHIWHGARTLFRDVFAGIDPDLDAQVEFGAFQKLGDPTTRRQVV.

The next 6 membrane-spanning stretches (helical) occupy residues 21-36 (SVHI…WAGS), 101-115 (IVFS…IWHW), 140-156 (GIHL…FGAF), 203-218 (IAAG…FHLS), 237-252 (VLSS…AFVV), and 457-472 (SFAL…HGAR).

This sequence belongs to the PsbB/PsbC family. PsbB subfamily. PSII is composed of 1 copy each of membrane proteins PsbA, PsbB, PsbC, PsbD, PsbE, PsbF, PsbH, PsbI, PsbJ, PsbK, PsbL, PsbM, PsbT, PsbX, PsbY, PsbZ, Psb30/Ycf12, at least 3 peripheral proteins of the oxygen-evolving complex and a large number of cofactors. It forms dimeric complexes. The cofactor is Binds multiple chlorophylls. PSII binds additional chlorophylls, carotenoids and specific lipids..

The protein resides in the plastid. Its subcellular location is the chloroplast thylakoid membrane. Its function is as follows. One of the components of the core complex of photosystem II (PSII). It binds chlorophyll and helps catalyze the primary light-induced photochemical processes of PSII. PSII is a light-driven water:plastoquinone oxidoreductase, using light energy to abstract electrons from H(2)O, generating O(2) and a proton gradient subsequently used for ATP formation. This is Photosystem II CP47 reaction center protein from Panax ginseng (Korean ginseng).